The primary structure comprises 284 residues: Esterase alnB (284 aa).

Active-site charge relay system residues include Ser93, Asp226, and His255.

Belongs to the LovG family.

It participates in polyketide biosynthesis. Esterase; part of the gene cluster that mediates the biosynthesis of asperlin, a polyketide showing anti-inflammatory, antitumor and antibiotic activities. The first step of the asperlin biosynthesis is the production of the intermediate 2,4,6-octatrienoic acid by the highly redusing polyketide synthase alnA with cleavage of the PKS product by the esterase alnB. 2,4,6-octatrienoic acid is further converted to asperlin via several steps involving the remaining enzymes from the cluster. This is Esterase alnB from Emericella nidulans (strain FGSC A4 / ATCC 38163 / CBS 112.46 / NRRL 194 / M139) (Aspergillus nidulans).